We begin with the raw amino-acid sequence, 488 residues long: NADH-ubiquinone oxidoreductase chain 2 (488 aa).

14 helical membrane-spanning segments follow: residues 11–31 (MIKYSIYLVPLIIMILLSISI), 38–58 (MMLLFKSLKLTIILILVLLTI), 74–94 (ELITFVEYILLVVSYLIISMF), 106–126 (ITEEALILMYSSLIGMLISME), 129–149 (NLITLFLSLEITSICFYILAL), 162–182 (LKYYIIGGIASTIILLGIVSI), 211–231 (IALIVLGLIIKLGVAPFHGWL), 239–259 (GMLMTFYLTITQKIVTIIVLI), 271–291 (IEVINKGLLVLILVTLIVGTV), 299–319 (VIRFIAYSAIVNSALLILFFV), 331–351 (IYYLINYIIGLAVLINIIIGV), 376–396 (IGISLIIVLIYLAGLPPFTNF), 412–434 (IYITMIIFFLTVGIMIYYMNVVK), and 460–480 (IVGGIIWIIISQIYLDEIISI).

The protein belongs to the complex I subunit 2 family.

It localises to the mitochondrion inner membrane. It carries out the reaction a ubiquinone + NADH + 5 H(+)(in) = a ubiquinol + NAD(+) + 4 H(+)(out). In terms of biological role, core subunit of the mitochondrial membrane respiratory chain NADH dehydrogenase (Complex I) that is believed to belong to the minimal assembly required for catalysis. Complex I functions in the transfer of electrons from NADH to the respiratory chain. The immediate electron acceptor for the enzyme is believed to be ubiquinone. The sequence is that of NADH-ubiquinone oxidoreductase chain 2 (nad2) from Dictyostelium discoideum (Social amoeba).